The chain runs to 511 residues: 2,3-bisphosphoglycerate-independent phosphoglycerate mutase (511 aa).

Mn(2+) contacts are provided by Asp-14 and Ser-64. Ser-64 acts as the Phosphoserine intermediate in catalysis. Substrate-binding positions include His-125, Arg-155–Asp-156, Arg-187, Arg-193, Arg-259–Arg-262, and Lys-333. Mn(2+)-binding residues include Asp-400, His-404, Asp-441, His-442, and His-460.

It belongs to the BPG-independent phosphoglycerate mutase family. Monomer. Mn(2+) serves as cofactor.

It carries out the reaction (2R)-2-phosphoglycerate = (2R)-3-phosphoglycerate. It functions in the pathway carbohydrate degradation; glycolysis; pyruvate from D-glyceraldehyde 3-phosphate: step 3/5. Its function is as follows. Catalyzes the interconversion of 2-phosphoglycerate and 3-phosphoglycerate. The polypeptide is 2,3-bisphosphoglycerate-independent phosphoglycerate mutase (Pseudoalteromonas atlantica (strain T6c / ATCC BAA-1087)).